The sequence spans 146 residues: Large ribosomal subunit protein uL15 (146 aa).

A compositionally biased stretch (basic and acidic residues) spans 1–18; it reads MKLHELKPSEGSRKERNR. A disordered region spans residues 1–50; it reads MKLHELKPSEGSRKERNRVGRGTGSGNGKTSGRGHKGQKARSGGGVRLGF. Residues 21–31 are compositionally biased toward gly residues; sequence RGTGSGNGKTS.

Belongs to the universal ribosomal protein uL15 family. As to quaternary structure, part of the 50S ribosomal subunit.

Binds to the 23S rRNA. This chain is Large ribosomal subunit protein uL15, found in Listeria monocytogenes serotype 4b (strain CLIP80459).